The chain runs to 161 residues: SsrA-binding protein (161 aa).

The disordered stretch occupies residues 138 to 161 (DKRTDSKEKDWNRDKARIMKSSLR). Over residues 139 to 154 (KRTDSKEKDWNRDKAR) the composition is skewed to basic and acidic residues.

The protein belongs to the SmpB family.

The protein resides in the cytoplasm. Functionally, required for rescue of stalled ribosomes mediated by trans-translation. Binds to transfer-messenger RNA (tmRNA), required for stable association of tmRNA with ribosomes. tmRNA and SmpB together mimic tRNA shape, replacing the anticodon stem-loop with SmpB. tmRNA is encoded by the ssrA gene; the 2 termini fold to resemble tRNA(Ala) and it encodes a 'tag peptide', a short internal open reading frame. During trans-translation Ala-aminoacylated tmRNA acts like a tRNA, entering the A-site of stalled ribosomes, displacing the stalled mRNA. The ribosome then switches to translate the ORF on the tmRNA; the nascent peptide is terminated with the 'tag peptide' encoded by the tmRNA and targeted for degradation. The ribosome is freed to recommence translation, which seems to be the essential function of trans-translation. This chain is SsrA-binding protein, found in Aliivibrio fischeri (strain ATCC 700601 / ES114) (Vibrio fischeri).